The following is a 155-amino-acid chain: Small ribosomal subunit protein uS7 (155 aa).

This sequence belongs to the universal ribosomal protein uS7 family. Part of the 30S ribosomal subunit. Contacts proteins S9 and S11.

One of the primary rRNA binding proteins, it binds directly to 16S rRNA where it nucleates assembly of the head domain of the 30S subunit. Is located at the subunit interface close to the decoding center, probably blocks exit of the E-site tRNA. The protein is Small ribosomal subunit protein uS7 of Xylella fastidiosa (strain 9a5c).